A 314-amino-acid polypeptide reads, in one-letter code: Probable UDP-sugar transporter protein SLC35A4 (314 aa).

Topologically, residues methionine 1–arginine 20 are cytoplasmic. Residues tryptophan 21–leucine 41 form a helical membrane-spanning segment. The Lumenal segment spans residues cysteine 42–serine 54. The helical transmembrane segment at cysteine 55 to glycine 75 threads the bilayer. At serine 76–threonine 88 the chain is on the cytoplasmic side. The chain crosses the membrane as a helical span at residues alanine 89 to methionine 109. The Lumenal segment spans residues glutamine 110–glutamine 145. The helical transmembrane segment at tryptophan 146 to leucine 166 threads the bilayer. Over glutamate 167–tyrosine 175 the chain is Cytoplasmic. The chain crosses the membrane as a helical span at residues isoleucine 176 to valine 196. The Lumenal portion of the chain corresponds to tyrosine 197 to arginine 206. Residues leucine 207–serine 227 traverse the membrane as a helical segment. Over histidine 228–serine 242 the chain is Cytoplasmic. A helical membrane pass occupies residues alanine 243 to methionine 263. The Lumenal segment spans residues lysine 264–threonine 267. Residues glycine 268–leucine 290 form a helical membrane-spanning segment. Topologically, residues glycine 291–threonine 314 are cytoplasmic.

Belongs to the nucleotide-sugar transporter family. SLC35A subfamily.

Its subcellular location is the golgi apparatus membrane. The catalysed reaction is CDP-L-ribitol(in) + CDP(out) = CDP-L-ribitol(out) + CDP(in). Its function is as follows. Mediates the transport of CDP-ribitol. Does not exhibit CMP-sialic acid, UDP-galactose and UDP-N-acetylglucosamine transport activity. The sequence is that of Probable UDP-sugar transporter protein SLC35A4 from Danio rerio (Zebrafish).